Reading from the N-terminus, the 313-residue chain is 4-diphosphocytidyl-2-C-methyl-D-erythritol kinase (313 aa).

Lys-29 is an active-site residue. 113–123 (PMGGGVGGGSS) contributes to the ATP binding site. Asp-155 is a catalytic residue.

Belongs to the GHMP kinase family. IspE subfamily.

The catalysed reaction is 4-CDP-2-C-methyl-D-erythritol + ATP = 4-CDP-2-C-methyl-D-erythritol 2-phosphate + ADP + H(+). Its pathway is isoprenoid biosynthesis; isopentenyl diphosphate biosynthesis via DXP pathway; isopentenyl diphosphate from 1-deoxy-D-xylulose 5-phosphate: step 3/6. Catalyzes the phosphorylation of the position 2 hydroxy group of 4-diphosphocytidyl-2C-methyl-D-erythritol. The chain is 4-diphosphocytidyl-2-C-methyl-D-erythritol kinase from Haemophilus influenzae (strain ATCC 51907 / DSM 11121 / KW20 / Rd).